The primary structure comprises 118 residues: NADH dehydrogenase [ubiquinone] iron-sulfur protein 5-A (118 aa).

The CHCH domain occupies 46–87 (KGRCYDFWMDFSECMSHCREPKDCTLLREDYLECLHHSKEFQ). 2 consecutive short sequence motifs (cx9C motif) follow at residues 49–59 (CYDFWMDFSEC) and 69–79 (CTLLREDYLEC). 2 disulfides stabilise this stretch: Cys49–Cys79 and Cys59–Cys69. Residues 98–118 (RKLRAASRKGEEAGDGTHNHH) form a disordered region.

It belongs to the complex I NDUFS5 subunit family. Complex I is composed of at least 49 different subunits. This is a component of the iron-sulfur (IP) fragment of the enzyme.

The protein resides in the mitochondrion. It is found in the mitochondrion inner membrane. Its subcellular location is the mitochondrion intermembrane space. Functionally, accessory subunit of the mitochondrial membrane respiratory chain NADH dehydrogenase (Complex I), that is believed not to be involved in catalysis. Complex I functions in the transfer of electrons from NADH to the respiratory chain. The immediate electron acceptor for the enzyme is believed to be ubiquinone. The polypeptide is NADH dehydrogenase [ubiquinone] iron-sulfur protein 5-A (Arabidopsis thaliana (Mouse-ear cress)).